The chain runs to 1121 residues: PR domain zinc finger protein 10 (1121 aa).

Disordered regions lie at residues 1-24 and 92-125; these read MEAK…NTPQ and TEAS…MDDW. The span at 106-124 shows a compositional bias: acidic residues; that stretch reads VDSEDEEEDNDSEDSEMDD. Residues 173-290 enclose the SET domain; the sequence is LPLVLYIDRF…PKQELKVWYA (118 aa). An N-terminal PR domain; essential for transcriptional activation region spans residues 192–295; the sequence is IPKRTQFGPL…KVWYAASYAE (104 aa). A C2H2-type 1 zinc finger spans residues 319-341; the sequence is WPCYECNRRFMSSEQLQQHLNMH. 2 disordered regions span residues 350–387 and 419–473; these read RPKS…SADK and ESME…PHLT. Residues 351–374 are compositionally biased toward basic residues; it reads PKSRGRGRGRKRFGGARRPGRRTK. C2H2-type zinc fingers lie at residues 500 to 522, 529 to 551, 557 to 579, 585 to 608, 613 to 635, 641 to 664, 696 to 719, 741 to 764, and 803 to 826; these read FKCP…MRFH, HVCH…LVLH, YSCL…VGIH, FLCP…RSFH, FQCS…MLRH, FLCS…QRMH, FKCR…SKRH, YYCQ…LKNH, and VCCP…RKKH. The C-terminal glutamine-rich region; essential for transcriptional activation stretch occupies residues 871-1101; that stretch reads QAMTELSQTL…PAGGQQATTQ (231 aa). The interval 1077 to 1097 is disordered; that stretch reads VPSTATQGHPDPLEQPAGGQQ.

It belongs to the class V-like SAM-binding methyltransferase superfamily.

The protein resides in the nucleus. Functionally, transcriptional activator, essential for early embryonic development and survival of embryonic stem cells (ESCs). Supports cell growth and survival during early development by transcriptionally activating the expression of the translation initiation factor EIF3B, to sustain global translation. Activates the transcription of FLNC. The chain is PR domain zinc finger protein 10 (prdm10) from Danio rerio (Zebrafish).